The chain runs to 281 residues: Bis(5'-nucleosyl)-tetraphosphatase, symmetrical (281 aa).

It belongs to the Ap4A hydrolase family.

It carries out the reaction P(1),P(4)-bis(5'-adenosyl) tetraphosphate + H2O = 2 ADP + 2 H(+). Its function is as follows. Hydrolyzes diadenosine 5',5'''-P1,P4-tetraphosphate to yield ADP. The chain is Bis(5'-nucleosyl)-tetraphosphatase, symmetrical from Acidovorax ebreus (strain TPSY) (Diaphorobacter sp. (strain TPSY)).